The sequence spans 158 residues: Cyclic pyranopterin monophosphate synthase (158 aa).

Substrate is bound by residues 75-77 (LCH) and 113-114 (ME). Asp128 is an active-site residue.

The protein belongs to the MoaC family. In terms of assembly, homohexamer; trimer of dimers.

The catalysed reaction is (8S)-3',8-cyclo-7,8-dihydroguanosine 5'-triphosphate = cyclic pyranopterin phosphate + diphosphate. The protein operates within cofactor biosynthesis; molybdopterin biosynthesis. Its function is as follows. Catalyzes the conversion of (8S)-3',8-cyclo-7,8-dihydroguanosine 5'-triphosphate to cyclic pyranopterin monophosphate (cPMP). The sequence is that of Cyclic pyranopterin monophosphate synthase from Roseiflexus castenholzii (strain DSM 13941 / HLO8).